Here is a 169-residue protein sequence, read N- to C-terminus: Der GTPase-activating protein YihI (169 aa).

Disordered regions lie at residues 1 to 100 (MKPS…AELE) and 144 to 169 (GLSY…LRGN). Residues 10-19 (SKGHAKARRK) show a composition bias toward basic residues. Over residues 20–30 (TREELDQEARD) the composition is skewed to basic and acidic residues. Over residues 31–40 (RKRQKKRRGH) the composition is skewed to basic residues. Polar residues predominate over residues 49 to 58 (GNTTSGSKGQ). A compositionally biased stretch (acidic residues) spans 147–159 (YDDDEEEEEDEKQ). Residues 160–169 (EDMMRLLRGN) show a composition bias toward basic and acidic residues.

This sequence belongs to the YihI family. In terms of assembly, interacts with Der.

A GTPase-activating protein (GAP) that modifies Der/EngA GTPase function. May play a role in ribosome biogenesis. The chain is Der GTPase-activating protein YihI from Escherichia coli O6:H1 (strain CFT073 / ATCC 700928 / UPEC).